The sequence spans 412 residues: Putative competence-damage inducible protein (412 aa).

Belongs to the CinA family.

The polypeptide is Putative competence-damage inducible protein (Clostridium perfringens (strain 13 / Type A)).